The chain runs to 274 residues: Dermonecrotic toxin SdSicTox-betaIIB1bv (274 aa).

The active site involves H5. 2 residues coordinate Mg(2+): E25 and D27. H41 (nucleophile) is an active-site residue. Intrachain disulfides connect C45–C51 and C47–C190. Position 85 (D85) interacts with Mg(2+).

The protein belongs to the arthropod phospholipase D family. Class II subfamily. Requires Mg(2+) as cofactor. As to expression, expressed by the venom gland.

Its subcellular location is the secreted. The catalysed reaction is an N-(acyl)-sphingosylphosphocholine = an N-(acyl)-sphingosyl-1,3-cyclic phosphate + choline. It catalyses the reaction an N-(acyl)-sphingosylphosphoethanolamine = an N-(acyl)-sphingosyl-1,3-cyclic phosphate + ethanolamine. It carries out the reaction a 1-acyl-sn-glycero-3-phosphocholine = a 1-acyl-sn-glycero-2,3-cyclic phosphate + choline. The enzyme catalyses a 1-acyl-sn-glycero-3-phosphoethanolamine = a 1-acyl-sn-glycero-2,3-cyclic phosphate + ethanolamine. Functionally, dermonecrotic toxins cleave the phosphodiester linkage between the phosphate and headgroup of certain phospholipids (sphingolipid and lysolipid substrates), forming an alcohol (often choline) and a cyclic phosphate. This toxin acts on sphingomyelin (SM). It may also act on ceramide phosphoethanolamine (CPE), lysophosphatidylcholine (LPC) and lysophosphatidylethanolamine (LPE), but not on lysophosphatidylserine (LPS), and lysophosphatidylglycerol (LPG). It acts by transphosphatidylation, releasing exclusively cyclic phosphate products as second products. Induces dermonecrosis, hemolysis, increased vascular permeability, edema, inflammatory response, and platelet aggregation. This chain is Dermonecrotic toxin SdSicTox-betaIIB1bv, found in Sicarius cf. damarensis (strain GJB-2008) (Six-eyed sand spider).